A 476-amino-acid chain; its full sequence is Probable G-protein coupled receptor No9 (476 aa).

At 1 to 36 (MEGPPLSPAPADNVTLNVSCGRPATLFDWADHRLIS) the chain is on the extracellular side. N-linked (GlcNAc...) asparagine glycosylation is found at N13 and N17. The chain crosses the membrane as a helical span at residues 37–60 (LLALAFLNLMVVAGNLLVVMAVFV). The Cytoplasmic segment spans residues 61–69 (HSKLRTVTN). A helical transmembrane segment spans residues 70–93 (LFIVSLACADLLVGMLVLPFSATL). Over 94–103 (EVLDVWLYGD) the chain is Extracellular. A helical transmembrane segment spans residues 104–127 (VWCSVWLAVDVWMCTSSILNLCAI). C106 and C192 are oxidised to a cystine. Residues 128–152 (SLDRYLAVSQPISYPSLMSTRRAKQ) lie on the Cytoplasmic side of the membrane. The helical transmembrane segment at 153–172 (LIAAVWVLSFVICFPPLVGW) threads the bilayer. Residues 173–200 (NDRPGTLIGSRGSSACRLTCELTNERGY) are Extracellular-facing. The helical transmembrane segment at 201 to 221 (VIYSALGSFFLPSTVMLFFYG) threads the bilayer. Over 222–375 (RIYRTAVSTT…FRMETKAAKT (154 aa)) the chain is Cytoplasmic. Residues 266 to 278 (AAAGGARAHGQVR) show a composition bias toward low complexity. Disordered regions lie at residues 266–293 (AAAG…NKPS) and 317–351 (DSRP…PRFI). A helical transmembrane segment spans residues 376-396 (VGIIVGLFILCWLPFFVCYLV). Over 397-406 (RGFCADCVPP) the chain is Extracellular. Residues 407–430 (LLFSVFFWLGYCNSAVNPCVYALC) form a helical membrane-spanning segment. At 431–476 (SRDFRFAFSSILCKCVCRRGAMERRFRRTLLVGNRSQTEEDCEVAD) the chain is on the cytoplasmic side.

The protein belongs to the G-protein coupled receptor 1 family.

It localises to the cell membrane. Functionally, orphan G-protein coupled receptor. The sequence is that of Probable G-protein coupled receptor No9 from Amphibalanus amphitrite (Striped barnacle).